Consider the following 386-residue polypeptide: MRSQVIEYPMSLVRLAHELPIEAPRTAWLDSIIKGDCVSALERLPDHSVDVIFADPPYNLQLGGDLHRPDQSMVSAVDDHWDQFESFQAYDAFTRAWLLACRRVLKPNGTIWVIGSYHNIFRVGTQLQDLGFWLLNDIVWRKTNPMPNFRGRRFQNAHETLIWASRDQKGKGYTFNYEAMKAANDDVQMRSDWLFPICTGSERLKDENGDKVHPTQKPEALLARIMMASSKPGDVILDPFFGSGTTGAVAKRLGRHFVGIEREQPYIDAATARINAVEPLGKAELTVMTGKRAEPRVAFTSVMEAGLLRPGTVLCDERRRFAAIVRADGTLTANGEAGSIHRIGARVQGFDACNGWTFWHFEENGVLKPIDALRKIIREQMAAAGA.

Residues 280 to 382 enclose the RAMA domain; it reads LGKAELTVMT…LRKIIREQMA (103 aa).

The protein belongs to the N(4)/N(6)-methyltransferase family.

It catalyses the reaction a 2'-deoxyadenosine in DNA + S-adenosyl-L-methionine = an N(6)-methyl-2'-deoxyadenosine in DNA + S-adenosyl-L-homocysteine + H(+). A beta subtype methylase that recognizes the double-stranded sequence 5'-GANTC-3' and methylates A-2 on both strands. CcrM-mediated methylation has important cellular functions. Contributes to the accurate cell-cycle control of DNA replication and cellular morphology. The sequence is that of DNA methyltransferase CcrM (ccrM) from Brucella ovis (strain ATCC 25840 / 63/290 / NCTC 10512).